A 70-amino-acid chain; its full sequence is Sec-independent protein translocase protein TatA (70 aa).

A helical transmembrane segment spans residues methionine 1–glycine 21. The tract at residues glycine 42–lysine 70 is disordered. Over residues threonine 61 to lysine 70 the composition is skewed to basic and acidic residues.

The protein belongs to the TatA/E family. The Tat system comprises two distinct complexes: a TatABC complex, containing multiple copies of TatA, TatB and TatC subunits, and a separate TatA complex, containing only TatA subunits. Substrates initially bind to the TatABC complex, which probably triggers association of the separate TatA complex to form the active translocon.

The protein resides in the cell inner membrane. Its function is as follows. Part of the twin-arginine translocation (Tat) system that transports large folded proteins containing a characteristic twin-arginine motif in their signal peptide across membranes. TatA could form the protein-conducting channel of the Tat system. The polypeptide is Sec-independent protein translocase protein TatA (Agrobacterium fabrum (strain C58 / ATCC 33970) (Agrobacterium tumefaciens (strain C58))).